We begin with the raw amino-acid sequence, 296 residues long: GTPase Era (296 aa).

An Era-type G domain is found at 3–170 (KSGFVTIVGR…KELMFKYIPE (168 aa)). The G1 stretch occupies residues 11–18 (GRPNVGKS). 11-18 (GRPNVGKS) contacts GTP. The interval 37–41 (QTTRN) is G2. The segment at 58-61 (DTPG) is G3. Residues 58–62 (DTPGI) and 120–123 (NKID) contribute to the GTP site. A G4 region spans residues 120–123 (NKID). Residues 149 to 151 (ISA) form a G5 region. The 78-residue stretch at 201–278 (LSEEVPHGIA…YIRLWVKVKE (78 aa)) folds into the KH type-2 domain.

It belongs to the TRAFAC class TrmE-Era-EngA-EngB-Septin-like GTPase superfamily. Era GTPase family. As to quaternary structure, monomer.

It localises to the cytoplasm. It is found in the cell membrane. Functionally, an essential GTPase that binds both GDP and GTP, with rapid nucleotide exchange. Plays a role in 16S rRNA processing and 30S ribosomal subunit biogenesis and possibly also in cell cycle regulation and energy metabolism. This is GTPase Era from Clostridium botulinum (strain Kyoto / Type A2).